We begin with the raw amino-acid sequence, 290 residues long: MKYIAYAFELTHRPDELTLETAYDLLSAELAEIGFESFEQNETCLRAYIPVSTDIASDIPALLEQFPLPGLLWQYSSEIQPDINWNEQWEKNFFRPIRIEDKCLVRAPFHPTDPDIPLELIISPQMAFGTGHHETTSLMMSYLLDMDLRGLRVLDMGCGTGILAILARKLGASSVTAIDIDDWCIRNTGENAALNDIRDIDVRIGDASLLADCPMFDLIIANINRNILLDDMSAYRSRLGNGGTLLLSGFYTEDIPILTECAEILGLTLSETRSRNNWAALRFTPDSPKR.

S-adenosyl-L-methionine contacts are provided by T136, G157, D179, and N222.

The protein belongs to the methyltransferase superfamily. PrmA family.

The protein localises to the cytoplasm. The catalysed reaction is L-lysyl-[protein] + 3 S-adenosyl-L-methionine = N(6),N(6),N(6)-trimethyl-L-lysyl-[protein] + 3 S-adenosyl-L-homocysteine + 3 H(+). Methylates ribosomal protein L11. This Porphyromonas gingivalis (strain ATCC BAA-308 / W83) protein is Ribosomal protein L11 methyltransferase.